The primary structure comprises 370 residues: Aminomethyltransferase (370 aa).

The protein belongs to the GcvT family. In terms of assembly, the glycine cleavage system is composed of four proteins: P, T, L and H.

The enzyme catalyses N(6)-[(R)-S(8)-aminomethyldihydrolipoyl]-L-lysyl-[protein] + (6S)-5,6,7,8-tetrahydrofolate = N(6)-[(R)-dihydrolipoyl]-L-lysyl-[protein] + (6R)-5,10-methylene-5,6,7,8-tetrahydrofolate + NH4(+). In terms of biological role, the glycine cleavage system catalyzes the degradation of glycine. In Clostridium botulinum (strain Okra / Type B1), this protein is Aminomethyltransferase.